Reading from the N-terminus, the 83-residue chain is MVKQIQSSDKENYDLLLLLPNVYAMTLLIITNTLLIILSYSVLLNNDVLLTLTTIRNIPISIAPTMAIESTIVSSTSLITTSP.

The chain crosses the membrane as a helical span at residues 24-44 (AMTLLIITNTLLIILSYSVLL).

The protein localises to the host membrane. This is an uncharacterized protein from Acidianus sp. F28 (AFV-2).